A 193-amino-acid polypeptide reads, in one-letter code: HMG-Y-related protein A (193 aa).

One can recognise an H15 domain in the interval 11–81 (PIPPYPEMIL…LKNNYFRAGA (71 aa)). The interval 75 to 193 (NYFRAGAPDA…PAVPSETAAA (119 aa)) is disordered. The short motif at 86–92 (PKRGRGR) is the Nuclear localization signal 1 (NLS) element. 4 DNA-binding regions (a.T hook) span residues 87–98 (KRGRGRPPKARD), 113–124 (GRGRGRPPKAKS), 138–149 (PKPRGRPPKKAK), and 173–184 (KRGRGRPPKVRP). Positions 145–149 (PKKAK) match the Nuclear localization signal 2 (NLS) motif.

Belongs to the histone H1/H5 family. Post-translationally, phosphorylated by CDK, this phosphorylation prevents DNA-binding. Motility is increased when hypophosphorylated. Acetylated.

The protein localises to the nucleus. Its subcellular location is the nucleolus. Binds A/T-rich DNA (e.g. present in the storage gamma-zein gene promoter) with a highly dynamic distribution into the nucleus. Probably involved in endosperm development, during cells shift from a mitotic cycle to endoreduplication leading to massive synthesis of storage proteins (zeins) and starch. In Zea mays (Maize), this protein is HMG-Y-related protein A.